A 237-amino-acid polypeptide reads, in one-letter code: Putative N-acetylmannosamine-6-phosphate 2-epimerase (237 aa).

Belongs to the NanE family.

It carries out the reaction an N-acyl-D-glucosamine 6-phosphate = an N-acyl-D-mannosamine 6-phosphate. It functions in the pathway amino-sugar metabolism; N-acetylneuraminate degradation; D-fructose 6-phosphate from N-acetylneuraminate: step 3/5. In terms of biological role, converts N-acetylmannosamine-6-phosphate (ManNAc-6-P) to N-acetylglucosamine-6-phosphate (GlcNAc-6-P). The protein is Putative N-acetylmannosamine-6-phosphate 2-epimerase of Listeria monocytogenes serotype 4a (strain HCC23).